We begin with the raw amino-acid sequence, 2998 residues long: Probable polyketide synthase 14 (2998 aa).

The 438-residue stretch at 19–456 (EDDIAIIGIG…GSNCCLILSE (438 aa)) folds into the Ketosynthase family 3 (KS3) domain. Residues C189, H331, and H376 each act as for beta-ketoacyl synthase activity in the active site. The interval 657 to 690 (GIEASFIVGHSLGEIPAAYCSGMITLDTLCYLIY) is acyl/malonyl transferase. The For acyl/malonyl transferase activity role is filled by S667. Residues 962–1084 (IDQLGFSLIE…GNFQLFTSGN (123 aa)) are N-terminal hotdog fold. A PKS/mFAS DH domain is found at 962-1249 (IDQLGFSLIE…CKSLTIIKDS (288 aa)). Catalysis depends on H996, which acts as the Proton acceptor; for dehydratase activity. Residues 1101-1249 (NLTKLTKNEL…CKSLTIIKDS (149 aa)) are C-terminal hotdog fold. The active-site Proton donor; for dehydratase activity is the D1159. The helical transmembrane segment at 1979 to 1999 (SILIHSGSGGIGLSALNILKW) threads the bilayer. A Carrier domain is found at 2476–2553 (ENDTSIDSLF…SSIKLITNQL (78 aa)). The residue at position 2513 (S2513) is an O-(pantetheine 4'-phosphoryl)serine. Residues 2559 to 2578 (DGQQQQHRQNKKNNNIPENK) are disordered. The span at 2561–2573 (QQQQHRQNKKNNN) shows a compositional bias: low complexity. The helical transmembrane segment at 2621–2641 (IFLTGSTGFLGAYLLWYLIQM) threads the bilayer.

The cofactor is pantetheine 4'-phosphate.

The protein resides in the membrane. In terms of biological role, probable polyketide synthase. This is Probable polyketide synthase 14 (pks14) from Dictyostelium discoideum (Social amoeba).